The primary structure comprises 142 residues: Boophilin-G2 (142 aa).

Positions 1–15 are cleaved as a signal peptide; that stretch reads MKYLILLAVLGTAFA. Gln-16 bears the Pyrrolidone carboxylic acid mark. BPTI/Kunitz inhibitor domains lie at 21 to 71 and 89 to 139; these read CRLP…QKAC and CEPA…ELVC. Intrachain disulfides connect Cys-21-Cys-71, Cys-30-Cys-54, Cys-46-Cys-67, Cys-89-Cys-139, Cys-98-Cys-122, and Cys-114-Cys-135.

As to quaternary structure, interacts with host thrombin and trypsin. Post-translationally, the N-terminus is blocked. Expressed in the midgut.

The protein localises to the secreted. Functionally, midgut thrombin inhibitor that plays a major role in keeping the midgut microenvironment at low hemostatic and inflammatory tonus. Also inhibits FXIa (F11), kallikrein (KLK1), neutrophil elastase (ELANE) and cathepsin G (CTSG), which play a role in the contact pathway of the coagulation cascade. Also abrogates platelet aggregation by cathepsin G and plasmin, and attenuates tissue factor (F3) pathway inhibitor cleavage by elastase. In vivo, inhibits thrombosis and promotes bleeding in mice. This is Boophilin-G2 from Rhipicephalus microplus (Cattle tick).